The sequence spans 78 residues: MSRVCQVTGKRPVTGNNRSHARNATKRRFLPNLQTHRFWVESEKRFVKLRLTAKGMRIIDKKGIDIVLAEMRVRGESV.

The segment at 1-20 (MSRVCQVTGKRPVTGNNRSH) is disordered.

The protein belongs to the bacterial ribosomal protein bL28 family.

This is Large ribosomal subunit protein bL28 from Photobacterium profundum (strain SS9).